We begin with the raw amino-acid sequence, 556 residues long: Putative solute carrier family 22 member 31 (556 aa).

Over 1–23 (MEQEARVLRAAGGFGRARRLLAS) the chain is Cytoplasmic. The helical transmembrane segment at 24–44 (ASWVPCIVLGLVLSSEELLTA) threads the bilayer. Topologically, residues 45–128 (QPAPHCRPDP…WNLVCGDGWK (84 aa)) are extracellular. Residues 129–149 (VPLEQVSHLLGWLLGCVILGA) form a helical membrane-spanning segment. The Cytoplasmic portion of the chain corresponds to 150 to 157 (GCDRFGRR). Residues 158 to 178 (AVFVASLVLTTGLGASEALAA) traverse the membrane as a helical segment. At 179 to 182 (SFPT) the chain is on the extracellular side. Residues 183–203 (LLVLRLLHGGTLAGALLALYL) traverse the membrane as a helical segment. The Cytoplasmic segment spans residues 204 to 218 (ARLELCDPPHRLAFS). Residues 219–239 (MGAGLFSVVGTLLLPGLAALV) form a helical membrane-spanning segment. The Extracellular portion of the chain corresponds to 240–246 (QDWRLLQ). Residues 247 to 267 (GLGALMSGLLLLFWGFPALFP) form a helical membrane-spanning segment. The Cytoplasmic segment spans residues 268-339 (ESPCWLLATG…LRTRVTWRNG (72 aa)). The helical transmembrane segment at 340 to 357 (LILGFSSLVGGGIRASFR) threads the bilayer. Over 358 to 366 (RSLAPQVPT) the chain is Extracellular. A helical transmembrane segment spans residues 367–387 (FYLPYFLEAGLEAAALVFLLL). The Cytoplasmic portion of the chain corresponds to 388–395 (TADCCGRR). A helical transmembrane segment spans residues 396–416 (PVLLLGTMVTGLASLLLLAGA). At 417 to 420 (QYLP) the chain is on the extracellular side. The helical transmembrane segment at 421–441 (GWTVLFLSVLGLLASRAVSAL) threads the bilayer. Over 442 to 448 (SSLFAAE) the chain is Cytoplasmic. Residues 449–469 (VFPTVIRGAGLGLVLGAGFLG) traverse the membrane as a helical segment. At 470-483 (QAAGPLDTLHGRQG) the chain is on the extracellular side. The chain crosses the membrane as a helical span at residues 484-504 (FFLQQVVFASLAVLALLCVLL). The Cytoplasmic portion of the chain corresponds to 505–556 (LPESRSRGLPQSLQDADRLRRSPLLRGRPRQDHLPLLPPSNSYWAGHTPEQH). Residues 524-556 (RRSPLLRGRPRQDHLPLLPPSNSYWAGHTPEQH) form a disordered region.

This sequence belongs to the major facilitator (TC 2.A.1) superfamily. Organic cation transporter (TC 2.A.1.19) family.

It localises to the membrane. Functionally, organic anion transporter that mediates the uptake of ions. The chain is Putative solute carrier family 22 member 31 from Homo sapiens (Human).